The chain runs to 150 residues: 3-dehydroquinate dehydratase (150 aa).

The active-site Proton acceptor is the Tyr-26. Residues Asn-77, His-83, and Asp-90 each contribute to the substrate site. His-103 serves as the catalytic Proton donor. Substrate is bound by residues 104–105 (LS) and Arg-114.

This sequence belongs to the type-II 3-dehydroquinase family. In terms of assembly, homododecamer.

The enzyme catalyses 3-dehydroquinate = 3-dehydroshikimate + H2O. The protein operates within metabolic intermediate biosynthesis; chorismate biosynthesis; chorismate from D-erythrose 4-phosphate and phosphoenolpyruvate: step 3/7. Catalyzes a trans-dehydration via an enolate intermediate. This Histophilus somni (strain 129Pt) (Haemophilus somnus) protein is 3-dehydroquinate dehydratase.